We begin with the raw amino-acid sequence, 198 residues long: Crinkler effector protein BLC01 (198 aa).

Residues 1–15 (MMVKLICAIVDIAGA) form the signal peptide. The tract at residues 16–55 (AFPIDIDTNELVGDFKKVIKAENSRTIACDANDLRLFLAK) is LQLFLAK domain. A DWL domain region spans residues 56–113 (TDGRWLTEFEVQNGVADISVFEELDVVGAPLNMIGLSEETVSSVAITKELVKAKKTPL). The HVLVXXP motif motif lies at 114–119 (HVLVVP).

Belongs to the Crinkler effector family.

It is found in the secreted. Its subcellular location is the host cell. Functionally, secreted effector that elicits necrosis in host plants, a characteristic of plant innate immunity. The sequence is that of Crinkler effector protein BLC01 from Bremia lactucae (Lettuce downy mildew).